The sequence spans 1299 residues: MSSESSFGLMQIGLATAEDIRGWSYGEVKKPETINYRTLKPEKDGLFCEKIFGPSRDWECYCGKYKRVRFKGIICERCGVEVTRAKVRRERMGHIELAAPVTHIWYFKGVPSRLGYLLDLAPKDLEKVIYFAAYMITSVDEAARHEELPNLQVEHDIEKKQLIDNRDGDIAAIARDLEGEIARLEGEGAKAADKKKARDSADRQMANVRKRADADIERLEQVWDRFKNLKVADLEGDEGLYRELRDRYGMYFEGSMGAEAIKKRLEGFDMQAESDLLRDIIANGKGQRKTRALKRLKVVNAFLTTNNSPLGMVLDAVPVIPPELRPMVQLDGGRFATSDLNDLYRRVINRNNRLKRLLDLGAPEIIVNNEKRMLQEAVDSLFDNGRRGRPVTGPGNRPLKSLSDMLKGKQGRFRQNLLGKRVDYSGRSVIVVGPQLKLHQCGLPKQMALELFKPFVMKRLVDLNHAQNIKSAKRMVERYRPQVWDVLEEIITEHPVLLNRAPTLHRLGIQAFEPQLVEGKAIQLHPLVCGAFNADFDGDQMAVHLPLSPEAQAEARILMLSSNNILKPSDGRPVTLPSQDMIIGLYHLTTKRKGSAGEGRIFGSVSEAIMAFDARDLHLNSQVKIRLEGFVPYSGWEAPEGWEQGQPAIVETSLGQVLFNETLPADYPWVEAVADKGELSRIVNDLAERYPKVVTAATLDNLKDAGFYWATRSGVTVAISDIEVPAAKPEILAGYEERAAKIQGQYDKGLIDDDERRQELIEIWNKATNDIAAVMRESLSPMNTINRMVSSGARGNWMQVRQIAGIRGLVANPKGEIIPRPIKSSYREGLSVLEYFIATHGARKGLADTALRTANSGYLTRRLVDVSQDVIVREEDCGTERGLVTPIAVADSNGELVLDENVENSAYARTLAVDVVDSEGNVLAAAGTDCGDVVIDELFKAGITEVKVRSVLTCESSVGTCALCYGRSLATGKTVDIGEAVGIIAAQSIGEPGTQLTMRTFHTGGAVSAGGGDDITQGLPRIQELFEARTPKGVAPIAEAAGRITIEESERQMRLVITPDDGTEEIAYPVLRRSRLLIEDGDHVTVGQKLINGPVDPKQVLRIMGPRAAQKFLVDEVQGVYRSQGIGIHDKHVEVIVRQMLRRVTVIESGESDLLPGELAERSRFEDANRRVVSEGKAPASGRPELMGITKASLATESWLSAASFQETTRVLTQAAMEGKSDPLLGLKENVIIGKLIPAGTGLPRYTEVTVEPTEEAKANLFTGPSAFSDFSYDTLGGDGAPEFHAIPLDDYDLGNDFR.

Zn(2+)-binding residues include cysteine 60, cysteine 62, cysteine 75, and cysteine 78. Mg(2+) is bound by residues aspartate 535, aspartate 537, and aspartate 539. Cysteine 877, cysteine 954, cysteine 961, and cysteine 964 together coordinate Zn(2+).

It belongs to the RNA polymerase beta' chain family. The RNAP catalytic core consists of 2 alpha, 1 beta, 1 beta' and 1 omega subunit. When a sigma factor is associated with the core the holoenzyme is formed, which can initiate transcription. Requires Mg(2+) as cofactor. It depends on Zn(2+) as a cofactor.

The enzyme catalyses RNA(n) + a ribonucleoside 5'-triphosphate = RNA(n+1) + diphosphate. DNA-dependent RNA polymerase catalyzes the transcription of DNA into RNA using the four ribonucleoside triphosphates as substrates. This is DNA-directed RNA polymerase subunit beta' from Pseudarthrobacter chlorophenolicus (strain ATCC 700700 / DSM 12829 / CIP 107037 / JCM 12360 / KCTC 9906 / NCIMB 13794 / A6) (Arthrobacter chlorophenolicus).